Consider the following 180-residue polypeptide: CDP-archaeol synthase (180 aa).

5 consecutive transmembrane segments (helical) span residues 5–25 (LVATAFWAMLPAYVPNNAAVL), 54–74 (AVGTLTGVVLALALNRIAEPA), 78–98 (LGVDLPTFALPAAFALAFGAM), 118–138 (AFPGLDQLDFVVVALAAVFVV), and 142–162 (WALAVFTPSVLVVVLVMTPIL).

Belongs to the CDP-archaeol synthase family. It depends on Mg(2+) as a cofactor.

It is found in the cell membrane. It carries out the reaction 2,3-bis-O-(geranylgeranyl)-sn-glycerol 1-phosphate + CTP + H(+) = CDP-2,3-bis-O-(geranylgeranyl)-sn-glycerol + diphosphate. It functions in the pathway membrane lipid metabolism; glycerophospholipid metabolism. Catalyzes the formation of CDP-2,3-bis-(O-geranylgeranyl)-sn-glycerol (CDP-archaeol) from 2,3-bis-(O-geranylgeranyl)-sn-glycerol 1-phosphate (DGGGP) and CTP. This reaction is the third ether-bond-formation step in the biosynthesis of archaeal membrane lipids. This is CDP-archaeol synthase from Halorubrum lacusprofundi (strain ATCC 49239 / DSM 5036 / JCM 8891 / ACAM 34).